A 433-amino-acid polypeptide reads, in one-letter code: Trigger factor (433 aa).

In terms of domain architecture, PPIase FKBP-type spans 163-248; sequence GDTVNIDFSG…VNEIKFKDVP (86 aa).

This sequence belongs to the FKBP-type PPIase family. Tig subfamily.

Its subcellular location is the cytoplasm. The enzyme catalyses [protein]-peptidylproline (omega=180) = [protein]-peptidylproline (omega=0). Involved in protein export. Acts as a chaperone by maintaining the newly synthesized protein in an open conformation. Functions as a peptidyl-prolyl cis-trans isomerase. The sequence is that of Trigger factor from Staphylococcus epidermidis (strain ATCC 35984 / DSM 28319 / BCRC 17069 / CCUG 31568 / BM 3577 / RP62A).